Reading from the N-terminus, the 192-residue chain is Putative manganese efflux pump MntP (192 aa).

6 consecutive transmembrane segments (helical) span residues 2 to 22 (IAIIVQTLLISVSVAMDAFAV), 41 to 61 (SALWFGGSQALFLILGHYAAS), 62 to 82 (AFSAYVTAFDHWIIFGLLAFI), 109 to 129 (MLPLAVACSIDAFAVGVSLAF), 136 to 156 (FAILCISVVTGLFSAAGLYIG), and 172 to 192 (GVVLILIGVKVLLEHLGVIAF).

The protein belongs to the MntP (TC 9.B.29) family.

It localises to the cell membrane. In terms of biological role, probably functions as a manganese efflux pump. The sequence is that of Putative manganese efflux pump MntP from Bifidobacterium longum subsp. infantis (strain ATCC 15697 / DSM 20088 / JCM 1222 / NCTC 11817 / S12).